The chain runs to 94 residues: DASH complex subunit DAD5 (94 aa).

Over residues 1–20 the composition is skewed to low complexity; sequence MRRSTIVPTSRTSSSSPSPS. Positions 1–25 are disordered; the sequence is MRRSTIVPTSRTSSSSPSPSQMKSF.

The protein belongs to the DASH complex HSK3 family. As to quaternary structure, component of the DASH complex consisting of ask1, dad1, dad2, dad3, dad4, dam1, duo1, dad5, spc19 and spc34, with a stoichiometry of one copy of each subunit per complex. Multiple DASH complexes oligomerize to form a ring that encircles spindle microtubules and organizes the rod-like NDC80 complexes of the outer kinetochore. DASH complex oligomerization strengthens microtubule attachments. On cytoplasmic microtubules, DASH complexes appear to form patches instead of rings.

The protein localises to the nucleus. It localises to the cytoplasm. The protein resides in the cytoskeleton. It is found in the spindle. Its subcellular location is the chromosome. The protein localises to the centromere. It localises to the kinetochore. Its function is as follows. Component of the DASH complex that connects microtubules with kinetochores and couples microtubule depolymerisation to chromosome movement; it is involved in retrieving kinetochores to the spindle poles before their re-orientation on the spindle in early mitosis and allows microtubule depolymerization to pull chromosomes apart and resist detachment during anaphase. Kinetochores, consisting of a centromere-associated inner segment and a microtubule-contacting outer segment, play a crucial role in chromosome segregation by mediating the physical connection between centromeric DNA and microtubules. Kinetochores also serve as an input point for the spindle assembly checkpoint, which delays anaphase until all chromosomes have bioriented on the mitotic spindle. The DASH complex mediates bipolar kinetochore-microtubule attachments and facilitates the formation of additional interactions between outer kinetochore components and spindle microtubules. During chromosome movement along the microtubule, it is required both for the sliding of kinetochores along the lateral side of the microtubule and also for microtubule end-on pulling on the kinetochore. Modulates cytoplasmic microtubule dynamics by tracking the plus-end of shortening microtubules and slowing their depolymerization. In Schizosaccharomyces pombe (strain 972 / ATCC 24843) (Fission yeast), this protein is DASH complex subunit DAD5.